We begin with the raw amino-acid sequence, 344 residues long: DNA-directed RNA polymerase subunit alpha (344 aa).

The alpha N-terminal domain (alpha-NTD) stretch occupies residues 1-232 (MGQYTINLRE…HLFLPPFGLE (232 aa)). The interval 270–344 (LIKDQFLEYS…KRFGINLKLK (75 aa)) is alpha C-terminal domain (alpha-CTD).

The protein belongs to the RNA polymerase alpha chain family. As to quaternary structure, in plastids the minimal PEP RNA polymerase catalytic core is composed of four subunits: alpha, beta, beta', and beta''. When a (nuclear-encoded) sigma factor is associated with the core the holoenzyme is formed, which can initiate transcription.

It localises to the plastid. Its subcellular location is the chloroplast. The catalysed reaction is RNA(n) + a ribonucleoside 5'-triphosphate = RNA(n+1) + diphosphate. In terms of biological role, DNA-dependent RNA polymerase catalyzes the transcription of DNA into RNA using the four ribonucleoside triphosphates as substrates. This is DNA-directed RNA polymerase subunit alpha from Spirogyra maxima (Green alga).